Consider the following 126-residue polypeptide: Arginine decarboxylase proenzyme (126 aa).

Ser74 (schiff-base intermediate with substrate; via pyruvic acid) is an active-site residue. Ser74 bears the Pyruvic acid (Ser); by autocatalysis mark. His79 serves as the catalytic Proton acceptor; for processing activity. Cys94 serves as the catalytic Proton donor; for catalytic activity.

It belongs to the prokaryotic AdoMetDC family. Type 1 subfamily. Heterooctamer of four alpha and four beta chains arranged as a tetramer of alpha/beta heterodimers. Pyruvate is required as a cofactor. Post-translationally, is synthesized initially as an inactive proenzyme. Formation of the active enzyme involves a self-maturation process in which the active site pyruvoyl group is generated from an internal serine residue via an autocatalytic post-translational modification. Two non-identical subunits are generated from the proenzyme in this reaction, and the pyruvate is formed at the N-terminus of the alpha chain, which is derived from the carboxyl end of the proenzyme. The post-translation cleavage follows an unusual pathway, termed non-hydrolytic serinolysis, in which the side chain hydroxyl group of the serine supplies its oxygen atom to form the C-terminus of the beta chain, while the remainder of the serine residue undergoes an oxidative deamination to produce ammonia and the pyruvoyl group blocking the N-terminus of the alpha chain.

The catalysed reaction is L-arginine + H(+) = agmatine + CO2. It participates in amine and polyamine biosynthesis; agmatine biosynthesis; agmatine from L-arginine: step 1/1. In terms of biological role, specifically catalyzes the decarboxylation of L-arginine to agmatine. Has no S-adenosylmethionine decarboxylase (AdoMetDC) activity. This Pyrobaculum calidifontis (strain DSM 21063 / JCM 11548 / VA1) protein is Arginine decarboxylase proenzyme.